The primary structure comprises 66 residues: Large ribosomal subunit protein bL32 (66 aa).

This sequence belongs to the bacterial ribosomal protein bL32 family.

This chain is Large ribosomal subunit protein bL32, found in Rickettsia bellii (strain OSU 85-389).